We begin with the raw amino-acid sequence, 60 residues long: Cytotoxin 2 (60 aa).

4 cysteine pairs are disulfide-bonded: cysteine 3-cysteine 21, cysteine 14-cysteine 38, cysteine 42-cysteine 53, and cysteine 54-cysteine 59.

The protein belongs to the three-finger toxin family. Short-chain subfamily. Type IA cytotoxin sub-subfamily. As to quaternary structure, monomer, or heterodimer with alpha-cobratoxin (AC P01391); disulfide-linked. Expressed by the venom gland.

The protein localises to the secreted. Its subcellular location is the target cell membrane. Functionally, monomer: shows cytolytic activity. Heterodimer: has no cytolytic activity, but retains most of the alpha-cobratoxin capacity to compete with alpha-bungarotoxin for binding to Torpedo and alpha-7/CHRNA7 nicotinic acetylcholine receptors (nAChRs) as well as to Lymnea stagnalis acetylcholine-binding protein. In Naja kaouthia (Monocled cobra), this protein is Cytotoxin 2.